Here is a 193-residue protein sequence, read N- to C-terminus: Capsid protein (193 aa).

Post-translationally, the N-terminus is blocked.

Its subcellular location is the virion. The chain is Capsid protein from Crataegus (hawthorn).